A 159-amino-acid polypeptide reads, in one-letter code: Cyclic pyranopterin monophosphate synthase (159 aa).

Residues 75 to 77 (LCH) and 113 to 114 (ME) each bind substrate. Asp-128 is a catalytic residue.

This sequence belongs to the MoaC family. Homohexamer; trimer of dimers.

It carries out the reaction (8S)-3',8-cyclo-7,8-dihydroguanosine 5'-triphosphate = cyclic pyranopterin phosphate + diphosphate. Its pathway is cofactor biosynthesis; molybdopterin biosynthesis. In terms of biological role, catalyzes the conversion of (8S)-3',8-cyclo-7,8-dihydroguanosine 5'-triphosphate to cyclic pyranopterin monophosphate (cPMP). The chain is Cyclic pyranopterin monophosphate synthase from Heliobacterium modesticaldum (strain ATCC 51547 / Ice1).